A 393-amino-acid chain; its full sequence is Digeranylgeranylglycerophospholipid reductase 2 (393 aa).

9 residues coordinate FAD: aspartate 33, cysteine 44, alanine 45, glycine 47, arginine 100, alanine 124, aspartate 280, glycine 292, and isoleucine 293.

This sequence belongs to the geranylgeranyl reductase family. DGGGPL reductase subfamily. FAD is required as a cofactor.

The catalysed reaction is a 2,3-bis-O-phytanyl-sn-glycerol 1-phospholipid + 8 A = a 2,3-bis-O-(geranylgeranyl)-sn-glycerol 1-phospholipid + 8 AH2. The enzyme catalyses 2,3-bis-O-(phytanyl)-sn-glycerol 1-phosphate + 8 A = 2,3-bis-O-(geranylgeranyl)-sn-glycerol 1-phosphate + 8 AH2. It carries out the reaction CDP-2,3-bis-O-(geranylgeranyl)-sn-glycerol + 8 AH2 = CDP-2,3-bis-O-(phytanyl)-sn-glycerol + 8 A. It catalyses the reaction archaetidylserine + 8 AH2 = 2,3-bis-O-phytanyl-sn-glycero-3-phospho-L-serine + 8 A. It participates in membrane lipid metabolism; glycerophospholipid metabolism. Its function is as follows. Is involved in the reduction of 2,3-digeranylgeranylglycerophospholipids (unsaturated archaeols) into 2,3-diphytanylglycerophospholipids (saturated archaeols) in the biosynthesis of archaeal membrane lipids. Catalyzes the formation of archaetidic acid (2,3-di-O-phytanyl-sn-glyceryl phosphate) from 2,3-di-O-geranylgeranylglyceryl phosphate (DGGGP) via the hydrogenation of each double bond of the isoprenoid chains. Is also probably able to reduce double bonds of geranyl groups in CDP-2,3-bis-O-(geranylgeranyl)-sn-glycerol and archaetidylserine, thus acting at various stages in the biosynthesis of archaeal membrane lipids. The chain is Digeranylgeranylglycerophospholipid reductase 2 from Methanosphaera stadtmanae (strain ATCC 43021 / DSM 3091 / JCM 11832 / MCB-3).